The primary structure comprises 276 residues: Probable NADH-ubiquinone oxidoreductase 30.4 kDa subunit, mitochondrial (276 aa).

The segment at 248-276 (EPVGEGKDFTPESFKLPTPQPEPEQEEKK) is disordered.

This sequence belongs to the complex I 30 kDa subunit family. In terms of assembly, complex I is composed of about 30 different subunits. This is a component of the iron-sulfur protein fraction.

Its subcellular location is the mitochondrion inner membrane. It catalyses the reaction a ubiquinone + NADH + 5 H(+)(in) = a ubiquinol + NAD(+) + 4 H(+)(out). Functionally, core subunit of the mitochondrial membrane respiratory chain NADH dehydrogenase (Complex I) that is believed to belong to the minimal assembly required for catalysis. Complex I functions in the transfer of electrons from NADH to the respiratory chain. The immediate electron acceptor for the enzyme is believed to be ubiquinone. Essential for N-alkane assimilation. In Candida maltosa (Yeast), this protein is Probable NADH-ubiquinone oxidoreductase 30.4 kDa subunit, mitochondrial (ALI1).